The chain runs to 505 residues: Deoxyguanosinetriphosphate triphosphohydrolase (505 aa).

The HD domain maps to 66–273 (RLTHSMEVQQ…MEAADDISYC (208 aa)).

This sequence belongs to the dGTPase family. Type 1 subfamily. In terms of assembly, homotetramer. Mg(2+) is required as a cofactor.

It carries out the reaction dGTP + H2O = 2'-deoxyguanosine + triphosphate + H(+). Functionally, dGTPase preferentially hydrolyzes dGTP over the other canonical NTPs. The sequence is that of Deoxyguanosinetriphosphate triphosphohydrolase from Salmonella typhimurium (strain LT2 / SGSC1412 / ATCC 700720).